A 165-amino-acid polypeptide reads, in one-letter code: Putative L,D-transpeptidase YkuD (165 aa).

In terms of domain architecture, LysM spans 2–46; sequence LMYQVKPGETLESIAADFRTTRQALLQANPGLNGGQVSAGQSIII. Residues 57–164 form the L,D-TPase catalytic domain; sequence YRIAVSLNGR…VPNGTRVSIT (108 aa). H124 acts as the Proton donor/acceptor in catalysis. Catalysis depends on C140, which acts as the Nucleophile.

The protein belongs to the YkuD family. As to quaternary structure, monomer.

It localises to the spore wall. It functions in the pathway cell wall biogenesis; peptidoglycan biosynthesis. Functionally, probable enzyme that may play an important role in cell wall biology. The chain is Putative L,D-transpeptidase YkuD from Bacillus licheniformis (strain ATCC 14580 / DSM 13 / JCM 2505 / CCUG 7422 / NBRC 12200 / NCIMB 9375 / NCTC 10341 / NRRL NRS-1264 / Gibson 46).